Reading from the N-terminus, the 643-residue chain is Thread biopolymer filament subunit alpha (643 aa).

Residues 1-13 (MSISQTVSKSYTK) show a composition bias toward polar residues. The segment at 1–34 (MSISQTVSKSYTKSVSRGGQGVSYSQSSSHKVGG) is disordered. The head stretch occupies residues 1–191 (MSISQTVSKS…PDTVQHTRIR (191 aa)). A compositionally biased stretch (low complexity) spans 14–31 (SVSRGGQGVSYSQSSSHK). The IF rod domain occupies 192 to 510 (EKQDLQTLNT…KLLDSEETRI (319 aa)). The tract at residues 193-227 (KQDLQTLNTKFANLVDQVRTLEQHNAILKAQISMI) is coil 1A. Residues 228–240 (TSPSDTPEGPVNT) form a linker 1 region. Positions 241 to 341 (AVVASTVTAT…YNARVREVQA (101 aa)) are coil 1B. Residues 342-362 (AVTGGPTAAYSIRVDNTHQAI) are linker 12. The segment at 363-381 (DLTTSLQEMKTHYEVLATK) is coil 2A. A linker 2 region spans residues 382-389 (SREEAFTQ). Positions 390–510 (VQPRIQEMAV…KLLDSEETRI (121 aa)) are coil 2B. Positions 511–643 (SHGGGITITT…SSARSSSRIY (133 aa)) are tail. The segment at 622–643 (SRAGYSASRKSYSSARSSSRIY) is disordered.

This sequence belongs to the intermediate filament family. In terms of assembly, coiled-coil heterodimer of an alpha and a gamma subunit. Assemble into 10 nm filaments. Forms a massive, conical, intermediate filament biopolymer of approximately 60 cm.

It localises to the secreted. It is found in the extracellular space. Its function is as follows. Released extracellularly into seawater and provides physical and biological defense against invasive organism by modulation of the viscoelastic properties of mucus. The sequence is that of Thread biopolymer filament subunit alpha from Eptatretus stoutii (Pacific hagfish).